The chain runs to 525 residues: GMP synthase [glutamine-hydrolyzing] (525 aa).

One can recognise a Glutamine amidotransferase type-1 domain in the interval 8–207 (KILILDFGSQ…ALDICGCAAN (200 aa)). Cys85 functions as the Nucleophile in the catalytic mechanism. Catalysis depends on residues His181 and Glu183. The GMPS ATP-PPase domain maps to 208 to 400 (WKPSSIIEDA…LGLPYNMLYR (193 aa)). 235 to 241 (SGGVDSS) contacts ATP.

In terms of assembly, homodimer.

It carries out the reaction XMP + L-glutamine + ATP + H2O = GMP + L-glutamate + AMP + diphosphate + 2 H(+). Its pathway is purine metabolism; GMP biosynthesis; GMP from XMP (L-Gln route): step 1/1. Functionally, catalyzes the synthesis of GMP from XMP. The chain is GMP synthase [glutamine-hydrolyzing] from Shewanella sp. (strain MR-7).